Reading from the N-terminus, the 156-residue chain is Small ribosomal subunit protein uS7 (156 aa).

The protein belongs to the universal ribosomal protein uS7 family. Part of the 30S ribosomal subunit. Contacts proteins S9 and S11.

One of the primary rRNA binding proteins, it binds directly to 16S rRNA where it nucleates assembly of the head domain of the 30S subunit. Is located at the subunit interface close to the decoding center, probably blocks exit of the E-site tRNA. The polypeptide is Small ribosomal subunit protein uS7 (Cupriavidus necator (strain ATCC 17699 / DSM 428 / KCTC 22496 / NCIMB 10442 / H16 / Stanier 337) (Ralstonia eutropha)).